Consider the following 276-residue polypeptide: BES1/BZR1 homolog protein 1 (276 aa).

Disordered regions lie at residues 1-30 (MTAS…RERR), 76-125 (TTYR…PTRF), and 155-191 (SAPV…PTRR). The segment at 14–87 (RMPTWKEREN…YRKGSRPTET (74 aa)) is required for DNA-binding. Residues 84–103 (PTETTVPCSSIQLSPQSSAF) are compositionally biased toward polar residues. Positions 104-122 (QSPIPSYQASPSSSSYPSP) are enriched in low complexity. Threonine 159 bears the Phosphothreonine mark. The segment covering 164 to 174 (SPRRSNPRLPR) has biased composition (low complexity). Residues 175–189 (WQSSNFPVSAPSSPT) show a composition bias toward polar residues.

The protein belongs to the BZR/LAT61 family. Post-translationally, phosphorylated. Phosphorylation increases protein degradation.

The chain is BES1/BZR1 homolog protein 1 (BEH1) from Arabidopsis thaliana (Mouse-ear cress).